The following is a 128-amino-acid chain: Glycine cleavage system H protein (128 aa).

A Lipoyl-binding domain is found at Val-24–Arg-106. Lys-65 is modified (N6-lipoyllysine).

This sequence belongs to the GcvH family. In terms of assembly, the glycine cleavage system is composed of four proteins: P, T, L and H. The cofactor is (R)-lipoate.

In terms of biological role, the glycine cleavage system catalyzes the degradation of glycine. The H protein shuttles the methylamine group of glycine from the P protein to the T protein. The polypeptide is Glycine cleavage system H protein (Edwardsiella ictaluri (strain 93-146)).